A 270-amino-acid chain; its full sequence is Fibroblast growth factor 5 (270 aa).

Positions 1–20 are cleaved as a signal peptide; that stretch reads MSLSFLLLLFLSHLILSAWA. Residues 26–83 form a disordered region; that stretch reads LAPKGQPGPAATGRNPAGASSSRSSRGTTSSSSSSVSSSHSASLGNQGSGLEQSSFQW. Residues 43–68 are compositionally biased toward low complexity; it reads GASSSRSSRGTTSSSSSSVSSSHSAS. Positions 69–83 are enriched in polar residues; that stretch reads LGNQGSGLEQSSFQW. The N-linked (GlcNAc...) asparagine glycan is linked to Asn-112. The interval 236-257 is disordered; sequence PEKKKPPSPVKPKVPLSAPRKS.

The protein belongs to the heparin-binding growth factors family. In terms of assembly, interacts with FGFR1 and FGFR2. Affinity between fibroblast growth factors (FGFs) and their receptors is increased by heparan sulfate glycosaminoglycans that function as coreceptors. As to expression, expressed in skin.

It is found in the secreted. In terms of biological role, plays an important role in the regulation of cell proliferation and cell differentiation. Required for normal regulation of the hair growth cycle. Functions as an inhibitor of hair elongation by promoting progression from anagen, the growth phase of the hair follicle, into catagen the apoptosis-induced regression phase. The sequence is that of Fibroblast growth factor 5 (FGF5) from Felis catus (Cat).